Consider the following 377-residue polypeptide: Presenilin-associated rhomboid-like protein, mitochondrial (377 aa).

A mitochondrion-targeting transit peptide spans 1–50 (MALYSWVQRGWRCGQTWAPLLGGGYRELSATQARQLLGRRFNLLLQQKCG). The Mitochondrial matrix portion of the chain corresponds to 51–95 (FRKAPRKVEPRRSDTGSSGEAYKRSALIPPLEETVFYPSPYPVRT). Phosphoserine is present on residues S63 and S68. A helical transmembrane segment spans residues 96–116 (LLKPFFFTVGFTGCAFGSAAI). Topologically, residues 117 to 165 (WQYESLKSRVQSYFDGIKADWLDSIRPQKEGNLRKEINKWWNSLSDGQR) are mitochondrial intermembrane. A helical transmembrane segment spans residues 166 to 186 (TVTGIIAANALVFCLWRVPSL). The Mitochondrial matrix portion of the chain corresponds to 187-214 (HRTMIRYFTSNPASKVLCSPMLLSTFSH). A helical transmembrane segment spans residues 215 to 235 (FSLFHMAANMYVLWSFSTSIV). Over 236–242 (NILGQEQ) the chain is Mitochondrial intermembrane. Residues 243 to 263 (FVAVYLSAGVISNFVSYVCKV) traverse the membrane as a helical segment. The Mitochondrial matrix portion of the chain corresponds to 264–268 (ATGRY). Residues 269-289 (GPSLGASGAIMTVLAAVCTKI) form a helical membrane-spanning segment. S275 (nucleophile) is an active-site residue. The Mitochondrial intermembrane segment spans residues 290-293 (PEGR). Residues 294–314 (LAIIFLPVFTFTAGNALKAII) form a helical membrane-spanning segment. At 315-331 (AMDTAGMILGWKFFDHA) the chain is on the mitochondrial matrix side. Residues 332–352 (AHLGGALFGIWYITYGHELIW) form a helical membrane-spanning segment. H333 is an active-site residue. The Mitochondrial intermembrane portion of the chain corresponds to 353-377 (KNREPLVKIWHEIRTNGPKKGGGSK).

It belongs to the peptidase S54 family. Interacts with PSEN1 and PSEN2. Binds OPA1. Post-translationally, P-beta is proteolytically processed (beta-cleavage) in a PARL-dependent manner.

It localises to the mitochondrion inner membrane. The protein resides in the nucleus. It carries out the reaction Cleaves type-1 transmembrane domains using a catalytic dyad composed of serine and histidine that are contributed by different transmembrane domains.. Functionally, required for the control of apoptosis during postnatal growth. Essential for proteolytic processing of an antiapoptotic form of OPA1 which prevents the release of mitochondrial cytochrome c in response to intrinsic apoptotic signals. Required for the maturation of PINK1 into its 52kDa mature form after its cleavage by mitochondrial-processing peptidase (MPP). Promotes cleavage of serine/threonine-protein phosphatase PGAM5 in damaged mitochondria in response to loss of mitochondrial membrane potential. Mediates differential cleavage of PINK1 and PGAM5 depending on the health status of mitochondria, disassociating from PINK1 and associating with PGAM5 in response to mitochondrial membrane potential loss. Required for processing of CLPB into a form with higher protein disaggregase activity by removing an autoinhibitory N-terminal peptide. Promotes processing of DIABLO/SMAC in the mitochondrion which is required for DIABLO apoptotic activity. Also required for cleavage of STARD7 and TTC19. Promotes changes in mitochondria morphology regulated by phosphorylation of P-beta domain. This chain is Presenilin-associated rhomboid-like protein, mitochondrial, found in Rattus norvegicus (Rat).